Here is a 116-residue protein sequence, read N- to C-terminus: Flagellar transcriptional regulator FlhD (116 aa).

Belongs to the FlhD family. Homodimer; disulfide-linked. Forms a heterohexamer composed of two FlhC and four FlhD subunits. Each FlhC binds a FlhD dimer, forming a heterotrimer, and a hexamer assembles by dimerization of two heterotrimers.

The protein resides in the cytoplasm. Its function is as follows. Functions in complex with FlhC as a master transcriptional regulator that regulates transcription of several flagellar and non-flagellar operons by binding to their promoter region. Activates expression of class 2 flagellar genes, including fliA, which is a flagellum-specific sigma factor that turns on the class 3 genes. Also regulates genes whose products function in a variety of physiological pathways. This is Flagellar transcriptional regulator FlhD from Escherichia coli O157:H7.